The following is a 530-amino-acid chain: Lysine--tRNA ligase (530 aa).

The short motif at 28–36 is the 'HIGH' region element; sequence PSGHIHVGN. Positions 278-282 match the 'KMSKS' region motif; it reads PMSSS.

Belongs to the class-I aminoacyl-tRNA synthetase family.

The protein localises to the cytoplasm. The enzyme catalyses tRNA(Lys) + L-lysine + ATP = L-lysyl-tRNA(Lys) + AMP + diphosphate. The protein is Lysine--tRNA ligase (lysS) of Methanocaldococcus jannaschii (strain ATCC 43067 / DSM 2661 / JAL-1 / JCM 10045 / NBRC 100440) (Methanococcus jannaschii).